The chain runs to 256 residues: Thiazole synthase (256 aa).

Residue Lys-96 is the Schiff-base intermediate with DXP of the active site. Residues Gly-157, 183–184, and 205–206 contribute to the 1-deoxy-D-xylulose 5-phosphate site; these read AG and NT.

The protein belongs to the ThiG family. Homotetramer. Forms heterodimers with either ThiH or ThiS.

It is found in the cytoplasm. The catalysed reaction is [ThiS sulfur-carrier protein]-C-terminal-Gly-aminoethanethioate + 2-iminoacetate + 1-deoxy-D-xylulose 5-phosphate = [ThiS sulfur-carrier protein]-C-terminal Gly-Gly + 2-[(2R,5Z)-2-carboxy-4-methylthiazol-5(2H)-ylidene]ethyl phosphate + 2 H2O + H(+). Its pathway is cofactor biosynthesis; thiamine diphosphate biosynthesis. Functionally, catalyzes the rearrangement of 1-deoxy-D-xylulose 5-phosphate (DXP) to produce the thiazole phosphate moiety of thiamine. Sulfur is provided by the thiocarboxylate moiety of the carrier protein ThiS. In vitro, sulfur can be provided by H(2)S. The protein is Thiazole synthase of Clostridium beijerinckii (strain ATCC 51743 / NCIMB 8052) (Clostridium acetobutylicum).